Reading from the N-terminus, the 351-residue chain is Muscleblind-like protein 2a (351 aa).

C3H1-type zinc fingers lie at residues Trp-13–Lys-41, Asn-47–Ala-73, Thr-177–Asp-205, and Asp-213–Ala-239.

It belongs to the muscleblind family. Expressed in fast and slow myotomal muscle, heart, liver, skin, brain and testis.

It is found in the nucleus. Its subcellular location is the cytoplasm. Functionally, involved in pre-mRNA alternative splicing regulation. RNA-binding protein that binds to 5'ACACCC-3' core sequence. This chain is Muscleblind-like protein 2a (mbnl2a), found in Takifugu rubripes (Japanese pufferfish).